The primary structure comprises 323 residues: Thymidylate synthase (323 aa).

Residues R21 and R172 to R173 each bind dUMP. The active-site Nucleophile is C192. DUMP contacts are provided by residues R214–D217, N225, and H255–Y257. D217 contributes to the (6R)-5,10-methylene-5,6,7,8-tetrahydrofolate binding site. A322 is a (6R)-5,10-methylene-5,6,7,8-tetrahydrofolate binding site.

The protein belongs to the thymidylate synthase family. Bacterial-type ThyA subfamily. As to quaternary structure, homodimer.

It localises to the cytoplasm. The catalysed reaction is dUMP + (6R)-5,10-methylene-5,6,7,8-tetrahydrofolate = 7,8-dihydrofolate + dTMP. Its pathway is pyrimidine metabolism; dTTP biosynthesis. In terms of biological role, catalyzes the reductive methylation of 2'-deoxyuridine-5'-monophosphate (dUMP) to 2'-deoxythymidine-5'-monophosphate (dTMP) while utilizing 5,10-methylenetetrahydrofolate (mTHF) as the methyl donor and reductant in the reaction, yielding dihydrofolate (DHF) as a by-product. This enzymatic reaction provides an intracellular de novo source of dTMP, an essential precursor for DNA biosynthesis. This is Thymidylate synthase from Pseudomonas putida (strain ATCC 47054 / DSM 6125 / CFBP 8728 / NCIMB 11950 / KT2440).